A 201-amino-acid chain; its full sequence is Thymidylate kinase (201 aa).

Residue 7 to 14 coordinates ATP; sequence GIDGSGKS.

This sequence belongs to the thymidylate kinase family.

It carries out the reaction dTMP + ATP = dTDP + ADP. In terms of biological role, phosphorylation of dTMP to form dTDP in both de novo and salvage pathways of dTTP synthesis. The sequence is that of Thymidylate kinase from Thermosipho africanus (strain TCF52B).